An 80-amino-acid polypeptide reads, in one-letter code: Raniseptin-5 (80 aa).

A signal peptide spans 1–22 (MAFLKKSLFLVLFLGIVSLSIC). Residues 23 to 49 (EEEKREGEEEEKQEEENEELSEEELRE) constitute a propeptide that is removed on maturation.

The protein belongs to the frog skin active peptide (FSAP) family. Dermaseptin subfamily. Expressed by the skin glands.

It is found in the secreted. Its function is as follows. Has antibacterial activity. In Boana raniceps (Chaco tree frog), this protein is Raniseptin-5.